Consider the following 216-residue polypeptide: Ribosomal RNA small subunit methyltransferase G (216 aa).

S-adenosyl-L-methionine contacts are provided by residues glycine 73, leucine 78, 124–125 (AE), and arginine 139.

The protein belongs to the methyltransferase superfamily. RNA methyltransferase RsmG family.

Its subcellular location is the cytoplasm. Its function is as follows. Specifically methylates the N7 position of guanine in position 518 of 16S rRNA. The sequence is that of Ribosomal RNA small subunit methyltransferase G from Paenarthrobacter aurescens (strain TC1).